The following is a 275-amino-acid chain: 4-diphosphocytidyl-2-C-methyl-D-erythritol kinase (275 aa).

Lys14 is an active-site residue. Pro98–Ser108 is a binding site for ATP. Asp140 is an active-site residue.

The protein belongs to the GHMP kinase family. IspE subfamily.

It catalyses the reaction 4-CDP-2-C-methyl-D-erythritol + ATP = 4-CDP-2-C-methyl-D-erythritol 2-phosphate + ADP + H(+). It functions in the pathway isoprenoid biosynthesis; isopentenyl diphosphate biosynthesis via DXP pathway; isopentenyl diphosphate from 1-deoxy-D-xylulose 5-phosphate: step 3/6. Its function is as follows. Catalyzes the phosphorylation of the position 2 hydroxy group of 4-diphosphocytidyl-2C-methyl-D-erythritol. The polypeptide is 4-diphosphocytidyl-2-C-methyl-D-erythritol kinase (Francisella tularensis subsp. tularensis (strain FSC 198)).